Consider the following 131-residue polypeptide: Small ribosomal subunit protein uS8 (131 aa).

This sequence belongs to the universal ribosomal protein uS8 family. In terms of assembly, part of the 30S ribosomal subunit. Contacts proteins S5 and S12.

One of the primary rRNA binding proteins, it binds directly to 16S rRNA central domain where it helps coordinate assembly of the platform of the 30S subunit. This chain is Small ribosomal subunit protein uS8, found in Wolbachia sp. subsp. Brugia malayi (strain TRS).